The primary structure comprises 873 residues: Alanine--tRNA ligase (873 aa).

The Zn(2+) site is built by H562, H566, C664, and H668.

It belongs to the class-II aminoacyl-tRNA synthetase family. The cofactor is Zn(2+).

It is found in the cytoplasm. It carries out the reaction tRNA(Ala) + L-alanine + ATP = L-alanyl-tRNA(Ala) + AMP + diphosphate. In terms of biological role, catalyzes the attachment of alanine to tRNA(Ala) in a two-step reaction: alanine is first activated by ATP to form Ala-AMP and then transferred to the acceptor end of tRNA(Ala). Also edits incorrectly charged Ser-tRNA(Ala) and Gly-tRNA(Ala) via its editing domain. This is Alanine--tRNA ligase from Photobacterium profundum (strain SS9).